Here is a 523-residue protein sequence, read N- to C-terminus: Tryptamine 5-hydroxylase (523 aa).

A helical membrane pass occupies residues 5–25 (MASTMSLALLVLSAAYVLVAL). Cys-453 contributes to the heme binding site.

The protein belongs to the cytochrome P450 family. The cofactor is heme.

Its subcellular location is the endoplasmic reticulum membrane. The catalysed reaction is tryptamine + reduced [NADPH--hemoprotein reductase] + O2 = serotonin + oxidized [NADPH--hemoprotein reductase] + H2O + H(+). In terms of biological role, involved in serotonin biosynthesis. Catalyzes the conversion of tryptamine to serotonin. Accumulation of serotonin may play a role in innate immunity. The protein is Tryptamine 5-hydroxylase of Oryza sativa subsp. japonica (Rice).